A 365-amino-acid polypeptide reads, in one-letter code: MNTLGRFLRLTTFGESHGDVIGGVLDGMPSGIKIDYALLENEMKRRQGGRNVFITPRKEDDKVEITSGVFEDFSTGTPIGFLIHNQRARSKDYDNIKNLFRPSHADFTYFHKYGIRDFRGGGRSSARESAIRVAAGAFAKMLLREIGIVCESGIIEIGGIKAKNYDFNHALKSEIFALDEEQEEAQKTAIQNAIKNHDSIGGVALIRARSIKTNQKLPIGLGQGLYAKLDAKIAEAMMGLNGVKAVEIGKGVESSLLKGSEYNDLMDQKGFLSNRSGGVLGGMSNGEEIIVRVHFKPTPSIFQPQRTIDINGNECECLLKGRHDPCIAIRGSVVCESLLALVLADMVLLNLTSKIEYLKTIYNEN.

Arginine 46 is a binding site for NADP(+). FMN contacts are provided by residues 123 to 125, 241 to 242, glycine 281, 296 to 300, and arginine 322; these read RSS, NG, and KPTPS.

It belongs to the chorismate synthase family. Homotetramer. FMNH2 serves as cofactor.

The catalysed reaction is 5-O-(1-carboxyvinyl)-3-phosphoshikimate = chorismate + phosphate. It participates in metabolic intermediate biosynthesis; chorismate biosynthesis; chorismate from D-erythrose 4-phosphate and phosphoenolpyruvate: step 7/7. Its function is as follows. Catalyzes the anti-1,4-elimination of the C-3 phosphate and the C-6 proR hydrogen from 5-enolpyruvylshikimate-3-phosphate (EPSP) to yield chorismate, which is the branch point compound that serves as the starting substrate for the three terminal pathways of aromatic amino acid biosynthesis. This reaction introduces a second double bond into the aromatic ring system. The sequence is that of Chorismate synthase from Helicobacter pylori (strain ATCC 700392 / 26695) (Campylobacter pylori).